Reading from the N-terminus, the 268-residue chain is Tryptophan synthase alpha chain (268 aa).

Active-site proton acceptor residues include E49 and D60.

Belongs to the TrpA family. As to quaternary structure, tetramer of two alpha and two beta chains.

It catalyses the reaction (1S,2R)-1-C-(indol-3-yl)glycerol 3-phosphate + L-serine = D-glyceraldehyde 3-phosphate + L-tryptophan + H2O. It functions in the pathway amino-acid biosynthesis; L-tryptophan biosynthesis; L-tryptophan from chorismate: step 5/5. In terms of biological role, the alpha subunit is responsible for the aldol cleavage of indoleglycerol phosphate to indole and glyceraldehyde 3-phosphate. The sequence is that of Tryptophan synthase alpha chain from Xylella fastidiosa (strain 9a5c).